The primary structure comprises 528 residues: 2-isopropylmalate synthase (528 aa).

Residues 12–279 form the Pyruvate carboxyltransferase domain; it reads IRIFDTTLRD…DSSINTPRIV (268 aa). Positions 21, 214, 216, and 250 each coordinate Mn(2+). The segment at 401–528 is regulatory domain; that stretch reads RLASMTISDV…TTEAPAPATA (128 aa).

The protein belongs to the alpha-IPM synthase/homocitrate synthase family. LeuA type 1 subfamily. As to quaternary structure, homodimer. Mn(2+) is required as a cofactor.

Its subcellular location is the cytoplasm. The enzyme catalyses 3-methyl-2-oxobutanoate + acetyl-CoA + H2O = (2S)-2-isopropylmalate + CoA + H(+). The protein operates within amino-acid biosynthesis; L-leucine biosynthesis; L-leucine from 3-methyl-2-oxobutanoate: step 1/4. Functionally, catalyzes the condensation of the acetyl group of acetyl-CoA with 3-methyl-2-oxobutanoate (2-ketoisovalerate) to form 3-carboxy-3-hydroxy-4-methylpentanoate (2-isopropylmalate). This chain is 2-isopropylmalate synthase, found in Stenotrophomonas maltophilia (strain R551-3).